The following is a 435-amino-acid chain: Gamma-glutamyl phosphate reductase (435 aa).

The protein belongs to the gamma-glutamyl phosphate reductase family.

The protein localises to the cytoplasm. It catalyses the reaction L-glutamate 5-semialdehyde + phosphate + NADP(+) = L-glutamyl 5-phosphate + NADPH + H(+). It functions in the pathway amino-acid biosynthesis; L-proline biosynthesis; L-glutamate 5-semialdehyde from L-glutamate: step 2/2. Functionally, catalyzes the NADPH-dependent reduction of L-glutamate 5-phosphate into L-glutamate 5-semialdehyde and phosphate. The product spontaneously undergoes cyclization to form 1-pyrroline-5-carboxylate. This Aquifex aeolicus (strain VF5) protein is Gamma-glutamyl phosphate reductase.